The following is a 118-amino-acid chain: Large ribosomal subunit protein uL18 (118 aa).

This sequence belongs to the universal ribosomal protein uL18 family. Part of the 50S ribosomal subunit; part of the 5S rRNA/L5/L18/L25 subcomplex. Contacts the 5S and 23S rRNAs.

Functionally, this is one of the proteins that bind and probably mediate the attachment of the 5S RNA into the large ribosomal subunit, where it forms part of the central protuberance. This chain is Large ribosomal subunit protein uL18, found in Lactobacillus acidophilus (strain ATCC 700396 / NCK56 / N2 / NCFM).